A 213-amino-acid chain; its full sequence is Adenylate kinase (213 aa).

Gly-10–Thr-15 serves as a coordination point for ATP. The NMP stretch occupies residues Ser-30–Val-59. Residues Thr-31, Arg-36, Asp-57–Val-59, Gly-86–Arg-89, and Gln-93 contribute to the AMP site. Residues Gly-127–Asp-160 form an LID region. ATP-binding positions include Arg-128 and Thr-137–Phe-138. AMP contacts are provided by Arg-157 and Arg-168. Position 196 (Lys-196) interacts with ATP.

Belongs to the adenylate kinase family. As to quaternary structure, monomer.

It is found in the cytoplasm. It carries out the reaction AMP + ATP = 2 ADP. It functions in the pathway purine metabolism; AMP biosynthesis via salvage pathway; AMP from ADP: step 1/1. Its function is as follows. Catalyzes the reversible transfer of the terminal phosphate group between ATP and AMP. Plays an important role in cellular energy homeostasis and in adenine nucleotide metabolism. The sequence is that of Adenylate kinase from Streptococcus equi subsp. zooepidemicus (strain H70).